The primary structure comprises 130 residues: Sec-independent protein translocase protein TatB (130 aa).

Residues 1–21 (MFDIGFTELTLIFIIGLVVLG) form a helical membrane-spanning segment. 2 stretches are compositionally biased toward basic and acidic residues: residues 57 to 67 (QDMQERMEKQM) and 111 to 130 (PSDK…RRHD). A disordered region spans residues 57–130 (QDMQERMEKQ…NHDQDSRRHD (74 aa)).

It belongs to the TatB family. As to quaternary structure, the Tat system comprises two distinct complexes: a TatABC complex, containing multiple copies of TatA, TatB and TatC subunits, and a separate TatA complex, containing only TatA subunits. Substrates initially bind to the TatABC complex, which probably triggers association of the separate TatA complex to form the active translocon.

The protein resides in the cell inner membrane. In terms of biological role, part of the twin-arginine translocation (Tat) system that transports large folded proteins containing a characteristic twin-arginine motif in their signal peptide across membranes. Together with TatC, TatB is part of a receptor directly interacting with Tat signal peptides. TatB may form an oligomeric binding site that transiently accommodates folded Tat precursor proteins before their translocation. This chain is Sec-independent protein translocase protein TatB, found in Alcanivorax borkumensis (strain ATCC 700651 / DSM 11573 / NCIMB 13689 / SK2).